Here is an 88-residue protein sequence, read N- to C-terminus: Large ribosomal subunit protein bL27 (88 aa).

Positions 1 to 13 (MATKKGASSSSNG) are enriched in polar residues. The disordered stretch occupies residues 1-23 (MATKKGASSSSNGRDSEAKRLGV).

The protein belongs to the bacterial ribosomal protein bL27 family.

The protein is Large ribosomal subunit protein bL27 of Corynebacterium urealyticum (strain ATCC 43042 / DSM 7109).